The chain runs to 409 residues: Transcription termination factor 3, mitochondrial (409 aa).

A mitochondrion-targeting transit peptide spans 1-64 (MALLAQQLSR…KTDRALFSWS (64 aa)). The disordered stretch occupies residues 74–93 (RKSSTNSTLLPSVSEQPEKI).

Belongs to the mTERF family.

The protein resides in the mitochondrion. Its function is as follows. Binds promoter DNA and regulates initiation of transcription. Required for normal mitochondrial transcription and translation, and for normal assembly of mitochondrial respiratory complexes. Required for normal mitochondrial function. Maintains 16S rRNA levels and functions in mitochondrial ribosome assembly by regulating the biogenesis of the 39S ribosomal subunit. In Rattus norvegicus (Rat), this protein is Transcription termination factor 3, mitochondrial (Mterf3).